A 115-amino-acid polypeptide reads, in one-letter code: UPF0738 protein SACOL1009 (115 aa).

The protein belongs to the UPF0738 family.

This Staphylococcus aureus (strain COL) protein is UPF0738 protein SACOL1009.